Here is a 319-residue protein sequence, read N- to C-terminus: D-alanine--D-alanine ligase (319 aa).

Residues 1 to 23 (MTGPEWAHTRGTKVGQSSRTPPK) form a disordered region. One can recognise an ATP-grasp domain in the interval 120–313 (KDAFVAAGLP…FGKLCAWMVE (194 aa)). Residue 147–197 (MQPPYVVKPNNEGSSVGVYLVHEAANGPPQLSEDMPQEVMVEAFAPGRELT) coordinates ATP. Mg(2+) contacts are provided by Asp264, Glu280, and Asn282.

The protein belongs to the D-alanine--D-alanine ligase family. Requires Mg(2+) as cofactor. It depends on Mn(2+) as a cofactor.

It is found in the cytoplasm. The catalysed reaction is 2 D-alanine + ATP = D-alanyl-D-alanine + ADP + phosphate + H(+). It participates in cell wall biogenesis; peptidoglycan biosynthesis. Cell wall formation. This chain is D-alanine--D-alanine ligase, found in Roseobacter denitrificans (strain ATCC 33942 / OCh 114) (Erythrobacter sp. (strain OCh 114)).